The sequence spans 1328 residues: Mitogen-activated protein kinase kinase kinase 19 (1328 aa).

Positions M1–H19 are enriched in basic and acidic residues. 4 disordered regions span residues M1–L28, R44–Q74, V344–Y380, and Q524–K561. The segment covering V344–E361 has biased composition (basic and acidic residues). Positions S364–A377 are enriched in polar residues. Positions Q524–T542 are enriched in basic and acidic residues. The 264-residue stretch at W1061–L1324 folds into the Protein kinase domain. Residues L1067–V1075 and K1089 each bind ATP. D1186 acts as the Proton acceptor in catalysis.

This sequence belongs to the protein kinase superfamily. STE Ser/Thr protein kinase family. STE20 subfamily.

The enzyme catalyses L-seryl-[protein] + ATP = O-phospho-L-seryl-[protein] + ADP + H(+). The catalysed reaction is L-threonyl-[protein] + ATP = O-phospho-L-threonyl-[protein] + ADP + H(+). The protein is Mitogen-activated protein kinase kinase kinase 19 (MAP3K19) of Homo sapiens (Human).